We begin with the raw amino-acid sequence, 510 residues long: NAD(P) transhydrogenase subunit alpha (510 aa).

At 1 to 401 (MRIGIPRERL…EEKCTCSPWR (401 aa)) the chain is on the cytoplasmic side. Residues 120 to 122 (RIS), V175, 195 to 197 (DTR), E238, and L257 contribute to the NAD(+) site. The next 2 membrane-spanning stretches (helical) occupy residues 402-422 (KYAL…VAPK) and 423-443 (EFLG…YVVW). Over 444–452 (NVSHALHTP) the chain is Cytoplasmic. The helical transmembrane segment at 453–473 (LMSVTNAISGIIVVGALLQIG) threads the bilayer. Over 474-476 (QGG) the chain is Periplasmic. Residues 477–497 (WVSFLSFIAVLIASINIFGGF) traverse the membrane as a helical segment. At 498–510 (TVTQRMLKMFRKN) the chain is on the cytoplasmic side.

It belongs to the AlaDH/PNT family. As to quaternary structure, heterodimer of an alpha (PntA) and a beta (PntB) chain. Alpha subunit serves as the dimerization unit.

The protein localises to the cell inner membrane. The enzyme catalyses NAD(+) + NADPH + H(+)(in) = NADH + NADP(+) + H(+)(out). Functionally, the transhydrogenation between NADH and NADP is coupled to respiration and ATP hydrolysis and functions as a proton pump across the membrane. In Escherichia coli (strain K12), this protein is NAD(P) transhydrogenase subunit alpha (pntA).